The chain runs to 316 residues: tRNA dimethylallyltransferase (316 aa).

12–19 (GPTASGKT) contacts ATP. Residue 14–19 (TASGKT) coordinates substrate. Interaction with substrate tRNA stretches follow at residues 37–40 (DSAL) and 161–165 (QRILR).

It belongs to the IPP transferase family. As to quaternary structure, monomer. The cofactor is Mg(2+).

The catalysed reaction is adenosine(37) in tRNA + dimethylallyl diphosphate = N(6)-dimethylallyladenosine(37) in tRNA + diphosphate. Catalyzes the transfer of a dimethylallyl group onto the adenine at position 37 in tRNAs that read codons beginning with uridine, leading to the formation of N6-(dimethylallyl)adenosine (i(6)A). This chain is tRNA dimethylallyltransferase, found in Idiomarina loihiensis (strain ATCC BAA-735 / DSM 15497 / L2-TR).